The chain runs to 102 residues: MNGIPMEHGLILASILFALGLVGLMMRRNMLFVLMSLEIMMNSAGLAFIVAGTRWGQPDGQVMFLLVITLAAAEASVGLALLLQLYRRFKTLDIDAASRLRG.

3 helical membrane-spanning segments follow: residues 4–24, 30–50, and 62–82; these read IPME…LVGL, MLFV…AFIV, and VMFL…LALL.

Belongs to the complex I subunit 4L family. As to quaternary structure, NDH-1 is composed of 14 different subunits. Subunits NuoA, H, J, K, L, M, N constitute the membrane sector of the complex.

It is found in the cell inner membrane. The enzyme catalyses a quinone + NADH + 5 H(+)(in) = a quinol + NAD(+) + 4 H(+)(out). Functionally, NDH-1 shuttles electrons from NADH, via FMN and iron-sulfur (Fe-S) centers, to quinones in the respiratory chain. The immediate electron acceptor for the enzyme in this species is believed to be ubiquinone. Couples the redox reaction to proton translocation (for every two electrons transferred, four hydrogen ions are translocated across the cytoplasmic membrane), and thus conserves the redox energy in a proton gradient. This is NADH-quinone oxidoreductase subunit K from Chromohalobacter salexigens (strain ATCC BAA-138 / DSM 3043 / CIP 106854 / NCIMB 13768 / 1H11).